Reading from the N-terminus, the 444-residue chain is Nuclear envelope integral membrane protein 1 (444 aa).

The signal sequence occupies residues 1–43 (MAGGMKVAVSPAVGPGPWGSGVGGGGTVRLLLILSGCLVYGTA). The N-linked (GlcNAc...) asparagine glycan is linked to Asn125. The next 5 membrane-spanning stretches (helical) occupy residues 161–181 (PKLF…DLLS), 186–206 (FYYS…IIFI), 216–236 (PIYV…QLVF), 245–265 (CYWQ…FAVC), and 289–309 (LCFM…IIIA). The tract at residues 186 to 297 (FYYSTGMSVG…GLCFMYSGIQ (112 aa)) is a; required for its colocalization with lamins at the nuclear envelope. The segment at 336–405 (PVPPRLLTEE…LTPNEVSVHE (70 aa)) is b; required for interaction with RAN-GTP. Positions 336-444 (PVPPRLLTEE…PAITQNNFLT (109 aa)) are required for nuclear localization. 3 positions are modified to phosphoserine: Ser368, Ser424, and Ser425.

Belongs to the NEMP family. As to quaternary structure, homooligomer. Interacts with RAN-GTP. Interacts with EMD. Phosphorylation may regulate its interaction with RAN-GTP.

The protein resides in the nucleus inner membrane. The protein localises to the nucleus envelope. Functionally, together with EMD, contributes to nuclear envelope stiffness in germ cells. Required for female fertility. Essential for normal erythropoiesis. Required for efficient nuclear envelope opening and enucleation during the late stages of erythroblast maturation. This is Nuclear envelope integral membrane protein 1 (NEMP1) from Pongo abelii (Sumatran orangutan).